Reading from the N-terminus, the 149-residue chain is Protein SprT-like (149 aa).

Residues 4–143 (TDYVKQVSLE…CGLCRGKLLL (140 aa)) enclose the SprT-like domain. H64 is a binding site for Zn(2+). E65 is an active-site residue. Residue H68 coordinates Zn(2+).

Belongs to the SprT family. Zn(2+) serves as cofactor.

It is found in the cytoplasm. This Streptococcus pneumoniae (strain Taiwan19F-14) protein is Protein SprT-like.